The primary structure comprises 889 residues: Chromatin structure-remodeling complex subunit RSC2 (889 aa).

Residues 12–120 (QNSSALYKDL…KYLKDTIYPN (109 aa)) enclose the Bromo 1 domain. The interval 151-268 (EKAEEVARAN…QVSRTQVKRG (118 aa)) is disordered. A compositionally biased stretch (low complexity) spans 158 to 174 (RANAARAESSSSMNSTE). A compositionally biased stretch (acidic residues) spans 197 to 209 (NNDEDYEATDMDI). Over residues 210–222 (DNPKDADFPDLIR) the composition is skewed to basic and acidic residues. The span at 241–250 (STTPSHSGTP) shows a compositional bias: polar residues. The span at 255-268 (PRHRQVSRTQVKRG) shows a compositional bias: basic residues. The Bromo 2 domain occupies 280–382 (RMKNVMKVLK…KTFTSLARFE (103 aa)). The BAH domain occupies 408–526 (ISYHVGDWAL…ESDKIFNKIR (119 aa)). The disordered stretch occupies residues 601-624 (GEYATSDDCPRYIIRPNDSPEEGQ). Tyr612 bears the Phosphotyrosine mark. Ser682 carries the phosphoserine modification. Residues 831 to 865 (EVEETMEDVTGKDKDDDGLEPDVENEKESLPGPFV) form a disordered region.

This sequence belongs to the RSC1 family. Component of the two forms of the RSC complex composed of at least either RSC1 or RSC2, and ARP7, ARP9, LDB7, NPL6, RSC3, RSC30, RSC4, RSC58, RSC6, RSC8, RSC9, SFH1, STH1, HTL1 and probably RTT102. The complexes interact with histone and histone variant components of centromeric chromatin.

It is found in the nucleus. Its function is as follows. Component of the chromatin structure remodeling complex (RSC), which is involved in transcription regulation and nucleosome positioning. RSC is responsible for the transfer of a histone octamer from a nucleosome core particle to naked DNA. The reaction requires ATP and involves an activated RSC-nucleosome intermediate. Remodeling reaction also involves DNA translocation, DNA twist and conformational change. As a reconfigurer of centromeric and flanking nucleosomes, RSC complex is required both for proper kinetochore function in chromosome segregation and, via a PKC1-dependent signaling pathway, for organization of the cellular cytoskeleton. This subunit is involved in meiotic sporulation through regulating IME2 expression, and is also essential for 2-micron plasmid maintenance and for normal REP1 protein localization. This chain is Chromatin structure-remodeling complex subunit RSC2 (RSC2), found in Saccharomyces cerevisiae (strain ATCC 204508 / S288c) (Baker's yeast).